Here is a 177-residue protein sequence, read N- to C-terminus: MIIYRDLFSGDELCSDTFPMKLVNDVVFEFTGKHVVRKLGEVTLEGANPSAEEFDEGTEEQMESGIDIVLNHQLMEMPMYQDIKIFKDWIKEYMKKLVEKMKSDGESEESISKFKKNMQEYVTSLLKKDRFKELQFFSGPGENAAEGQLAIVEYRQVSDTEQPIVMLIKQGLVVEKC.

A TCTP domain is found at 1–177 (MIIYRDLFSG…IKQGLVVEKC (177 aa)).

Belongs to the TCTP family.

Its subcellular location is the cytoplasm. Functionally, involved in calcium binding and microtubule stabilization. The protein is Translationally-controlled tumor protein homolog of Trichinella pseudospiralis (Parasitic roundworm).